A 161-amino-acid polypeptide reads, in one-letter code: Deoxyuridine 5'-triphosphate nucleotidohydrolase (161 aa).

Residues 80–82 (RSG), Asn93, 97–99 (TVD), and Lys107 contribute to the substrate site.

Belongs to the dUTPase family. Mg(2+) serves as cofactor.

It carries out the reaction dUTP + H2O = dUMP + diphosphate + H(+). Its pathway is pyrimidine metabolism; dUMP biosynthesis; dUMP from dCTP (dUTP route): step 2/2. Functionally, this enzyme is involved in nucleotide metabolism: it produces dUMP, the immediate precursor of thymidine nucleotides and it decreases the intracellular concentration of dUTP so that uracil cannot be incorporated into DNA. This chain is Deoxyuridine 5'-triphosphate nucleotidohydrolase, found in Mesorhizobium japonicum (strain LMG 29417 / CECT 9101 / MAFF 303099) (Mesorhizobium loti (strain MAFF 303099)).